Reading from the N-terminus, the 396-residue chain is MIIEPKMRGFICLTSHPTGCEQNVINQINYVKSKGVINGPKKVLVIGASTGFGLASRITSAFGSNAATIGVFFEKPAQEGKPGSPGWYNTVAFQNEAKKAGIYAKSINGDAFSTEVKQKTIDLIKADLGQVDLVIYSLASPVRTNPVTGVTHRSVLKPIGGAFSNKTVDFHTGNVSTVTIEPANEEDVTNTVAVMGGEDWGMWMDAMLEAGVLAEGATTVAYSYIGPALTEAVYRKGTIGRAKDHLEASAATITDKLKSVKGKAYVSVNKALVTQASSAIPVIPLYISLLYKVMKAEGIHEGCIEQIQRLYADRLYTGKAIPTDEQGRIRIDDWEMREDVQANVAALWEQVTSENVSDISDLKGYKNDFLNLFGFAVNKVDYLADVNENVTIEGLV.

NAD(+) contacts are provided by residues 47–52 (GASTGF), 73–74 (FE), 110–111 (DA), and 138–139 (LA). A substrate-binding site is contributed by Y224. Y234 acts as the Proton donor in catalysis. NAD(+) is bound by residues K243 and 272-274 (LVT).

The protein belongs to the TER reductase family. Monomer.

It catalyses the reaction a 2,3-saturated acyl-[ACP] + NAD(+) = a (2E)-enoyl-[ACP] + NADH + H(+). Its pathway is lipid metabolism; fatty acid biosynthesis. In terms of biological role, involved in the final reduction of the elongation cycle of fatty acid synthesis (FAS II). Catalyzes the reduction of a carbon-carbon double bond in an enoyl moiety that is covalently linked to an acyl carrier protein (ACP). This is Enoyl-[acyl-carrier-protein] reductase [NADH] from Cytophaga hutchinsonii (strain ATCC 33406 / DSM 1761 / CIP 103989 / NBRC 15051 / NCIMB 9469 / D465).